A 687-amino-acid polypeptide reads, in one-letter code: DNA ligase (687 aa).

Residues 34–38, 83–84, and Glu117 each bind NAD(+); these read DAEYD and SL. The N6-AMP-lysine intermediate role is filled by Lys119. NAD(+) contacts are provided by Arg140, Glu182, Lys298, and Lys322. Cys416, Cys419, Cys434, and Cys439 together coordinate Zn(2+). The BRCT domain occupies 609–687; that stretch reads EARGPFAGKT…EEEFVRLLKE (79 aa).

This sequence belongs to the NAD-dependent DNA ligase family. LigA subfamily. Mg(2+) is required as a cofactor. Requires Mn(2+) as cofactor.

The enzyme catalyses NAD(+) + (deoxyribonucleotide)n-3'-hydroxyl + 5'-phospho-(deoxyribonucleotide)m = (deoxyribonucleotide)n+m + AMP + beta-nicotinamide D-nucleotide.. In terms of biological role, DNA ligase that catalyzes the formation of phosphodiester linkages between 5'-phosphoryl and 3'-hydroxyl groups in double-stranded DNA using NAD as a coenzyme and as the energy source for the reaction. It is essential for DNA replication and repair of damaged DNA. The polypeptide is DNA ligase (Anaeromyxobacter dehalogenans (strain 2CP-C)).